Consider the following 579-residue polypeptide: Nuclear hormone receptor family member nhr-71 (579 aa).

Positions 8-83 form a DNA-binding region, nuclear receptor; sequence SQECMVCSAP…AGMKIGAVQP (76 aa). 2 NR C4-type zinc fingers span residues 11–31 and 47–71; these read CMVCSAPADGLHYGAISCRSC and CKHTNTCLIDPDGRCACRSCRFTKC. Disordered regions lie at residues 82-124 and 168-189; these read QPRR…SDGP and EPIPSTSSAPEKQSCQSSPNDD. Composition is skewed to polar residues over residues 106 to 124 and 171 to 186; these read SMNNSPLERNGNSFSSDGP and PSTSSAPEKQSCQSSP. The region spanning 189–452 is the NR LBD domain; that stretch reads DEQQEFNHLV…KFWYETLCYA (264 aa).

This sequence belongs to the nuclear hormone receptor family.

It is found in the nucleus. Functionally, orphan nuclear receptor. In Caenorhabditis elegans, this protein is Nuclear hormone receptor family member nhr-71 (nhr-71).